The primary structure comprises 70 residues: Small ribosomal subunit protein bS21 (70 aa).

Belongs to the bacterial ribosomal protein bS21 family.

In Campylobacter hominis (strain ATCC BAA-381 / DSM 21671 / CCUG 45161 / LMG 19568 / NCTC 13146 / CH001A), this protein is Small ribosomal subunit protein bS21.